Here is a 106-residue protein sequence, read N- to C-terminus: ATP-dependent Clp protease adapter protein ClpS (106 aa).

Belongs to the ClpS family. As to quaternary structure, binds to the N-terminal domain of the chaperone ClpA.

In terms of biological role, involved in the modulation of the specificity of the ClpAP-mediated ATP-dependent protein degradation. This Aliivibrio salmonicida (strain LFI1238) (Vibrio salmonicida (strain LFI1238)) protein is ATP-dependent Clp protease adapter protein ClpS.